Here is a 145-residue protein sequence, read N- to C-terminus: Ribonuclease H (145 aa).

Residues 2 to 143 (SKKEVAIYTD…ADSLARKAII (142 aa)) form the RNase H type-1 domain. 4 residues coordinate Mg(2+): Asp11, Glu49, Asp71, and Asp135.

It belongs to the RNase H family. As to quaternary structure, monomer. It depends on Mg(2+) as a cofactor.

The protein resides in the cytoplasm. It carries out the reaction Endonucleolytic cleavage to 5'-phosphomonoester.. Endonuclease that specifically degrades the RNA of RNA-DNA hybrids. The sequence is that of Ribonuclease H from Wolbachia sp. subsp. Drosophila simulans (strain wRi).